We begin with the raw amino-acid sequence, 323 residues long: Elongation factor P--(R)-beta-lysine ligase (323 aa).

76 to 78 (SPE) provides a ligand contact to substrate. ATP contacts are provided by residues 100–102 (RNE) and Asn-109. A substrate-binding site is contributed by Tyr-118. Residue 242 to 243 (EL) participates in ATP binding. Glu-249 is a substrate binding site. Gly-298 contacts ATP.

The protein belongs to the class-II aminoacyl-tRNA synthetase family. EpmA subfamily. In terms of assembly, homodimer.

It carries out the reaction D-beta-lysine + L-lysyl-[protein] + ATP = N(6)-((3R)-3,6-diaminohexanoyl)-L-lysyl-[protein] + AMP + diphosphate + H(+). In terms of biological role, with EpmB is involved in the beta-lysylation step of the post-translational modification of translation elongation factor P (EF-P). Catalyzes the ATP-dependent activation of (R)-beta-lysine produced by EpmB, forming a lysyl-adenylate, from which the beta-lysyl moiety is then transferred to the epsilon-amino group of a conserved specific lysine residue in EF-P. In Actinobacillus succinogenes (strain ATCC 55618 / DSM 22257 / CCUG 43843 / 130Z), this protein is Elongation factor P--(R)-beta-lysine ligase.